The sequence spans 80 residues: Small pacifastin protease inhibitor (80 aa).

Residues 1–24 (MSKVLKVGLLLLLVAVAASAYAVA) form the signal peptide. Positions 25–47 (EENGAPKENKQLPQIDDYGVTNK) are excised as a propeptide. Positions 45–80 (TNKCPANQPFKWNCNYCTCGPEGKDASCTRMACPQH) constitute a Pacifastin domain. 3 disulfide bridges follow: C48–C63, C58–C77, and C61–C72.

Belongs to the protease inhibitor I19 family. As to expression, expressed in the venom apparatus. Low transcript levels are also detected in other tissues.

The protein localises to the secreted. Its function is as follows. Parasitic wasp protein that may interfere with the host immune response. The recombinant protein inhibits trypsin activity and prophenoloxidase (PPO) activation, an enzyme essential for both clotting and insect innate immune responses. It does not inhibit activity of chymotrypsin and protease K, and has no effect on phenoloxidase (PO) activity. This is Small pacifastin protease inhibitor from Nasonia vitripennis (Parasitic wasp).